Here is a 268-residue protein sequence, read N- to C-terminus: Glutamate racemase (268 aa).

Residues 9-10 (DS) and 41-42 (YG) each bind substrate. Residue Cys-73 is the Proton donor/acceptor of the active site. 74–75 (NS) contacts substrate. Residue Cys-183 is the Proton donor/acceptor of the active site. 184–185 (TH) serves as a coordination point for substrate.

It belongs to the aspartate/glutamate racemases family.

It catalyses the reaction L-glutamate = D-glutamate. Its pathway is cell wall biogenesis; peptidoglycan biosynthesis. Provides the (R)-glutamate required for cell wall biosynthesis. This Shewanella piezotolerans (strain WP3 / JCM 13877) protein is Glutamate racemase.